Reading from the N-terminus, the 463-residue chain is Putative sodium-coupled neutral amino acid transporter 11 (463 aa).

The segment at 1–27 is disordered; the sequence is MGYPGQRPVIPPQSHRDDRETLVSEHK. Residues 14 to 25 are compositionally biased toward basic and acidic residues; that stretch reads SHRDDRETLVSE. 11 helical membrane passes run 38-58, 65-85, 105-125, 150-170, 178-198, 225-245, 256-276, 298-320, 336-356, 358-378, and 397-417; these read AVFNVVNSIIGSGIIGLPYSM, LGILLLFWVSYVTDFSLILLI, GFPGYLLLSVLQFLYPFIAMI, LLIGRHLIIVLSTVVFTLPLS, LGKISLISTVLTTLILGIVVA, VGVMSFAFICHHNCFLVYGSL, IIHVSTLISVFISILFATCGY, VTFGRFCYGVTVILTYPIECFVT, VCHIIVTVVIITVATLVSLLI, CLGIVLELNGVLCAAPLIFII, and IMSCVMLPIGAVVMAVGFVMA. 3 N-linked (GlcNAc...) asparagine glycosylation sites follow: N437, N442, and N458.

The protein belongs to the amino acid/polyamine transporter 2 family.

The protein localises to the membrane. Putative sodium-dependent amino acid/proton antiporter. The protein is Putative sodium-coupled neutral amino acid transporter 11 (SLC38A11) of Bos taurus (Bovine).